We begin with the raw amino-acid sequence, 818 residues long: Dapper 1-A (818 aa).

The span at 1-10 (MKPIPSPEPP) shows a compositional bias: pro residues. Disordered regions lie at residues 1–30 (MKPI…WERH), 60–80 (VLSP…PRSD), 122–144 (IDSE…LSDG), 455–486 (NVTP…SALL), and 510–530 (ESSS…SSSQ). Residues 1 to 337 (MKPIPSPEPP…PVRTNKPRTS (337 aa)) form an interaction with tcf7l1-A region. Residues 21–30 (DKGEAEWERH) show a composition bias toward basic and acidic residues. Residues 79 to 130 (SDEQKLLEENISLLKKQLNCLRKRDAGLLSQLHELDKQINDLKIDSEKTEET) adopt a coiled-coil conformation. The span at 122–132 (IDSEKTEETDS) shows a compositional bias: basic and acidic residues. Residues 455 to 485 (NVTPNAPANLPNASSSVCNGSPRESTQNSAL) are compositionally biased toward polar residues. A compositionally biased stretch (basic and acidic residues) spans 512-524 (SSFEERPPLDFKS). Residues 815–818 (MTTV) carry the PDZ-binding motif.

The protein belongs to the dapper family. Interacts with dbf4 and tcf7l1-A. Interacts with dvl2/dsh via the C-terminus. As to expression, expressed in the animal and dorsal marginal regions at late blastula and early gastrula stages. Expressed predominantly in the anterior neural plate at neurulation. Expressed mainly in the ectodermal placodes, including the eye anlagen and the otic vesicle, at later stages of development.

The protein localises to the cytoplasm. Its subcellular location is the nucleus. Functionally, involved in regulation of intracellular signaling pathways during development. Specifically thought to play a role in canonical and/or non-canonical Wnt signaling pathways through interaction with DSH (Dishevelled) family proteins. Binds to dvl2/dsh and impedes the degradation of beta-catenin (ctnnb1-A and possibly ctnnb1-B), thereby enhancing the transcriptional activation of target genes of the Wnt signaling pathway. Also promotes catenin delta/ctnnd1 stability which in turn promotes zbtb33/kaiso sequestration and thus is involved in the regulation of zbtb33/kaiso-mediated transcriptional repression. May also bind to and directly stimulate the transcriptional activity of tcf7l1-A. Required for eye development and neural patterning. The protein is Dapper 1-A (dact1-a) of Xenopus laevis (African clawed frog).